The following is a 111-amino-acid chain: Small ribosomal subunit protein bS16 (111 aa).

The protein belongs to the bacterial ribosomal protein bS16 family.

The protein is Small ribosomal subunit protein bS16 of Rickettsia africae (strain ESF-5).